A 548-amino-acid chain; its full sequence is Biotin-dependent acetyl-/propionyl-coenzyme A carboxylase beta5 subunit (548 aa).

The disordered stretch occupies residues 1–23 (MTSVTDRSAHSAERSTEHTIDIH). A compositionally biased stretch (basic and acidic residues) spans 7 to 21 (RSAHSAERSTEHTID). Residues 25–281 (TAGKLAELHK…NNSTDAPRYQ (257 aa)) form the CoA carboxyltransferase N-terminal domain. The CoA carboxyltransferase C-terminal domain maps to 295–541 (DEDLELDTLI…ERKIAQLPPK (247 aa)).

The protein belongs to the AccD/PCCB family. As to quaternary structure, forms homohexamers. The biotin-dependent acyl-CoA carboxylase complex is composed of AccA3, which contains the biotin carboxylase (BC) and biotin carboxyl carrier protein (BCCP) domains, and AccD5, which contains the carboxyl transferase (CT) domain. The AccA3/AccD5 complex forms a dodecamer, and can associate with the epsilon subunit AccE5 (Rv3280), which stimulates carboxylation by the complex. Is also part of the long-chain acyl-CoA carboxylase (LCC) complex, which is composed of AccA3, AccD4, AccD5 and AccE5. The four subunits are essential for activity, but AccD5, together with AccE5, probably plays a structural role rather than a catalytic one.

The catalysed reaction is N(6)-carboxybiotinyl-L-lysyl-[protein] + acetyl-CoA = N(6)-biotinyl-L-lysyl-[protein] + malonyl-CoA. The enzyme catalyses N(6)-carboxybiotinyl-L-lysyl-[protein] + propanoyl-CoA = methylmalonyl-CoA + N(6)-biotinyl-L-lysyl-[protein]. It participates in lipid metabolism; mycolic acid biosynthesis. With respect to regulation, carboxylase activity of the AccA3/AccD5 complex is stimulated by interaction with AccE5. Functionally, component of a biotin-dependent acyl-CoA carboxylase complex. This subunit transfers the CO2 from carboxybiotin to the CoA ester substrate. When associated with the alpha3 subunit AccA3, is involved in the carboxylation of acetyl-CoA and propionyl-CoA, with a preference for propionyl-CoA. Is also required for the activity of the long-chain acyl-CoA carboxylase (LCC) complex. In Mycobacterium tuberculosis (strain ATCC 25618 / H37Rv), this protein is Biotin-dependent acetyl-/propionyl-coenzyme A carboxylase beta5 subunit.